A 390-amino-acid chain; its full sequence is Formamidopyrimidine-DNA glycosylase (390 aa).

The active-site Schiff-base intermediate with DNA is proline 2. The active-site Proton donor is glutamate 3. Lysine 60 serves as the catalytic Proton donor; for beta-elimination activity. DNA contacts are provided by tyrosine 107, arginine 126, lysine 167, and asparagine 186. Positions 283–390 (AEKAAKVRPA…AGKKPKGRKS (108 aa)) are disordered. Residues 301–316 (DDGDGEEDEQETEKED) are compositionally biased toward acidic residues. Residues 321–337 (SKKGQKPRGGRGKKPAS) are compositionally biased toward basic residues. Acidic residues predominate over residues 343 to 355 (ESDDDGDDSEAEE). A compositionally biased stretch (basic residues) spans 360–370 (PKGRGTKPAIK).

It belongs to the FPG family. In terms of assembly, monomer. In terms of tissue distribution, expressed in leaves (at protein levels).

It is found in the nucleus. It catalyses the reaction Hydrolysis of DNA containing ring-opened 7-methylguanine residues, releasing 2,6-diamino-4-hydroxy-5-(N-methyl)formamidopyrimidine.. The enzyme catalyses 2'-deoxyribonucleotide-(2'-deoxyribose 5'-phosphate)-2'-deoxyribonucleotide-DNA = a 3'-end 2'-deoxyribonucleotide-(2,3-dehydro-2,3-deoxyribose 5'-phosphate)-DNA + a 5'-end 5'-phospho-2'-deoxyribonucleoside-DNA + H(+). Functionally, involved in base excision repair of DNA damaged by oxidation or by mutagenic agents. Acts as a DNA glycosylase that recognizes and removes damaged bases. Can process efficiently 4,6-diamino-5-formamidopyrimidine (FapyA), 2,6-diamino-4- hydroxy-5-formamidopyrimidine (FapyG) and the further oxidation products of 8-oxoguanine (8-oxoG), such as guanidinohydantoin and spiroiminodihydantoin. Has marginal activity towards 8-oxoG. Has AP (apurinic/apyrimidinic) lyase activity. Cleaves the DNA backbone by beta-delta elimination to generate a single-strand break at the site of the removed base with both 3'- and 5'-phosphates. The protein is Formamidopyrimidine-DNA glycosylase (FPG1) of Arabidopsis thaliana (Mouse-ear cress).